The following is a 148-amino-acid chain: Deoxyuridine 5'-triphosphate nucleotidohydrolase (148 aa).

Substrate-binding positions include 68–70 (RSG), Asn-81, 85–87 (TID), and Lys-95.

Belongs to the dUTPase family. The cofactor is Mg(2+).

It catalyses the reaction dUTP + H2O = dUMP + diphosphate + H(+). It functions in the pathway pyrimidine metabolism; dUMP biosynthesis; dUMP from dCTP (dUTP route): step 2/2. This enzyme is involved in nucleotide metabolism: it produces dUMP, the immediate precursor of thymidine nucleotides and it decreases the intracellular concentration of dUTP so that uracil cannot be incorporated into DNA. The chain is Deoxyuridine 5'-triphosphate nucleotidohydrolase from Rickettsia typhi (strain ATCC VR-144 / Wilmington).